Reading from the N-terminus, the 751-residue chain is Amyloid-beta precursor protein (751 aa).

Residues 1–17 (MLPGLALLLLAAWTARA) form the signal peptide. Residues 18 to 682 (LEVPTDGNAG…AEDVGSNKGA (665 aa)) lie on the Extracellular side of the membrane. The segment at 28 to 123 (LLAEPQIAMF…PYRCLVGEFV (96 aa)) is GFLD subdomain. Positions 28-189 (LLAEPQIAMF…RGVEFVCCPL (162 aa)) constitute an E1 domain. 6 cysteine pairs are disulfide-bonded: C38–C62, C73–C117, C98–C105, C133–C187, C144–C174, and C158–C186. A heparin-binding site is contributed by 96–110 (NWCKRDRKQCKTHPH). The cuBD subdomain stretch occupies residues 131–189 (DKCKFLHQERMDVCETHLHWHTVAKETCSEKSTNLHDYGMLLPCGIDKFRGVEFVCCPL). The Cu(2+) site is built by H147, H151, and Y168. Positions 181–188 (GVEFVCCP) are zinc-binding. Zn(2+)-binding residues include E183, C186, and C187. The interval 195–284 (HVDSADAEED…TTTTTTESVE (90 aa)) is disordered. S198 and S206 each carry phosphoserine; by CK1 and CK2. Y217 and Y262 each carry sulfotyrosine. Residues 228 to 264 (VAEEEEVAEVEEEEADDDEDDEDGDEVEEEAEEPYEE) show a composition bias toward acidic residues. Positions 268-281 (RTTSIATTTTTTTE) are enriched in low complexity. 3 cysteine pairs are disulfide-bonded: C291–C341, C300–C324, and C316–C337. The BPTI/Kunitz inhibitor domain maps to 291-341 (CSEQAETGPCRAMISRWYFDVTEGKCAPFFYGGCGGNRNNFDTEEYCMAVC). Heparin-binding stretches follow at residues 316-344 (CAPF…CGSV) and 363-428 (PGDE…QEAA). Y336 carries the post-translational modification Sulfotyrosine. The OX-2 motif lies at 344-346 (VIP). The region spanning 355 to 546 (AVDKYLETPG…EEIQDEVDEL (192 aa)) is the E2 domain. S422 carries the phosphoserine modification. A Phosphotyrosine modification is found at Y478. A collagen-binding region spans residues 504–521 (AAQIRSQVMTHLRVIYER). N-linked (GlcNAc...) asparagine glycosylation is found at N523 and N552. Positions 658, 662, 665, and 666 each coordinate Cu(2+). H658, Y662, H665, and H666 together coordinate Zn(2+). The interval 676-703 (VGSNKGAIIGLMVGGVVIATVIVITLVM) is interaction with PSEN1. The chain crosses the membrane as a helical span at residues 683–703 (IIGLMVGGVVIATVIVITLVM). The Cytoplasmic segment spans residues 704–751 (LKKKQYTSIHHGVVEVDAAVTPEERHLSKMQQNGYENPTYKFFEQMQN). Positions 705–715 (KKKQYTSIHHG) match the Basolateral sorting signal motif. Residue T710 is modified to Phosphothreonine. S711 carries the post-translational modification Phosphoserine; by APP-kinase I. The tract at residues 713–732 (HHGVVEVDAAVTPEERHLSK) is interaction with G(o)-alpha. Residue T724 is modified to Phosphothreonine; by CDK5 and MAPK10. The tract at residues 737–751 (GYENPTYKFFEQMQN) is required for the interaction with KIF5B and for anterograde transport in axons. Y738 is subject to Phosphotyrosine; by ABL1. Positions 738–743 (YENPTY) match the YENPXY motif; contains endocytosis signal motif. K744 is covalently cross-linked (Glycyl lysine isopeptide (Lys-Gly) (interchain with G-Cter in ubiquitin)).

This sequence belongs to the APP family. Binds, via its C-terminus, to the PID domain of several cytoplasmic proteins, including APBB family members, the APBA family, MAPK8IP1, SHC1 and NUMB and DAB1. Binding to DAB1 inhibits its serine phosphorylation. Interacts (via NPXY motif) with DAB2 (via PID domain); the interaction is impaired by tyrosine phosphorylation of the NPXY motif. Also interacts with GPCR-like protein BPP, APPBP1, IB1, KNS2 (via its TPR domains), APPBP2 (via BaSS) and DDB1. In vitro, it binds MAPT via the MT-binding domains. Associates with microtubules in the presence of ATP and in a kinesin-dependent manner. Interacts, through a C-terminal domain, with GNAO1. Amyloid-beta protein 42 binds CHRNA7 in hippocampal neurons. Amyloid-beta associates with HADH2. Interacts with CPEB1, ANKS1B and AGER. Interacts with ITM2B. Interacts with ITM2C. Interacts with IDE. Can form homodimers; dimerization is enhanced in the presence of Cu(2+) ions. Can form homodimers; this is promoted by heparin binding. Amyloid-beta protein 40 interacts with S100A9. CTF-alpha product of APP interacts with GSAP. Isoform APP695 interacts with SORL1 (via N-terminal ectodomain); this interaction retains APP in the trans-Golgi network and reduces processing into soluble APP-alpha and amyloid-beta peptides. Isoform APP770 interacts with SORL1. The C99 fragment also interacts with SORL1. Interacts with PLD3. Interacts with VDAC1. Interacts with NSG1; could regulate APP processing. Amyloid-beta protein 42 interacts with FPR2. Interacts (via transmembrane region) with PSEN1; the interaction is direct. Interacts with LRRK2. Interacts (via cytoplasmic domain) with KIF5B. Interacts (via C-terminus) with APBB2/FE65L1 (via C-terminus). Interacts (via intracellular domain) with APBB3. Post-translationally, proteolytically processed under normal cellular conditions. Cleavage either by alpha-secretase, beta-secretase or theta-secretase leads to generation and extracellular release of soluble APP peptides, S-APP-alpha and S-APP-beta, and the retention of corresponding membrane-anchored C-terminal fragments, C80, C83 and C99. Subsequent processing of C80 and C83 by gamma-secretase yields P3 peptides. This is the major secretory pathway and is non-amyloidogenic. Alternatively, presenilin/nicastrin-mediated gamma-secretase processing of C99 releases the amyloid-beta proteins, amyloid-beta protein 40 and amyloid-beta protein 42, major components of amyloid plaques, and the cytotoxic C-terminal fragments, gamma-CTF(50), gamma-CTF(57) and gamma-CTF(59). PSEN1 cleavage is more efficient with C83 than with C99 as substrate (in vitro). Amyloid-beta protein 40 and Amyloid-beta protein 42 are cleaved by ACE. Many other minor amyloid-beta peptides, amyloid-beta 1-X peptides, are found in cerebral spinal fluid (CSF) including the amyloid-beta X-15 peptides, produced from the cleavage by alpha-secretase. In terms of processing, proteolytically cleaved by caspases during neuronal apoptosis. Cleavage at Asp-720 by either caspase-3, -8 or -9 results in the production of the neurotoxic C31 peptide and the increased production of amyloid-beta peptides. N- and O-glycosylated. Post-translationally, phosphorylation in the C-terminal on tyrosine, threonine and serine residues is neuron-specific. Phosphorylation can affect APP processing, neuronal differentiation and interaction with other proteins. Phosphorylated on Thr-724 in neuronal cells by Cdc5 kinase and Mapk10, in dividing cells by Cdc2 kinase in a cell-cycle dependent manner with maximal levels at the G2/M phase and, in vitro, by GSK-3-beta. The Thr-724 phosphorylated form causes a conformational change which reduces binding of Fe65 family members. In dopaminergic (DA) neurons, phosphorylation on Thr-724 by LRKK2 promotes the production and the nuclear translocation of the APP intracellular domain (AICD) which induces DA neuron apoptosis. Phosphorylation on Tyr-738 is required for SHC binding. Phosphorylated in the extracellular domain by casein kinases on both soluble and membrane-bound APP. This phosphorylation is inhibited by heparin. In terms of processing, trophic-factor deprivation triggers the cleavage of surface APP by beta-secretase to release sAPP-beta which is further cleaved to release an N-terminal fragment of APP (N-APP). Amyloid-beta peptides are degraded by IDE. Post-translationally, sulfated on tyrosine residues.

It localises to the cell membrane. The protein localises to the membrane. It is found in the perikaryon. Its subcellular location is the cell projection. The protein resides in the growth cone. It localises to the clathrin-coated pit. The protein localises to the early endosome. It is found in the cytoplasmic vesicle. Its subcellular location is the endoplasmic reticulum. The protein resides in the golgi apparatus. It localises to the secreted. The protein localises to the cell surface. It is found in the nucleus. Its subcellular location is the cytoplasm. In terms of biological role, functions as a cell surface receptor and performs physiological functions on the surface of neurons relevant to neurite growth, neuronal adhesion and axonogenesis. Interaction between APP molecules on neighboring cells promotes synaptogenesis. Involved in cell mobility and transcription regulation through protein-protein interactions. Can promote transcription activation through binding to APBB1-KAT5 and inhibit Notch signaling through interaction with Numb. Couples to apoptosis-inducing pathways such as those mediated by G(o) and JIP. Inhibits G(o)-alpha ATPase activity. Acts as a kinesin I membrane receptor, mediating the axonal transport of beta-secretase and presenilin 1. By acting as a kinesin I membrane receptor, plays a role in axonal anterograde transport of cargo towards synapses in axons. May be involved in copper homeostasis/oxidative stress through copper ion reduction. In vitro, copper-metallated APP induces neuronal death directly or is potentiated through Cu(2+)-mediated low-density lipoprotein oxidation. Can regulate neurite outgrowth through binding to components of the extracellular matrix such as heparin and collagen I and IV. Induces a AGER-dependent pathway that involves activation of p38 MAPK, resulting in internalization of amyloid-beta peptide and mitochondrial dysfunction in cultured cortical neurons. Provides Cu(2+) ions for GPC1 which are required for release of nitric oxide (NO) and subsequent degradation of the heparan sulfate chains on GPC1. Amyloid-beta peptides are lipophilic metal chelators with metal-reducing activity. Binds transient metals such as copper, zinc and iron. Functionally, the gamma-CTF peptides as well as the caspase-cleaved peptides, including C31, are potent enhancers of neuronal apoptosis. This is Amyloid-beta precursor protein from Saimiri sciureus (Common squirrel monkey).